The sequence spans 388 residues: Staphopain A (388 aa).

Residues 1-25 (MKRNFPKLIALSLIFSLSVTPIANA) form the signal peptide. Positions 26-214 (ESNSNIKAKD…TSQFKSNNYT (189 aa)) are excised as a propeptide. Active-site residues include Cys238, His334, and Asn355.

It belongs to the peptidase C47 family. In the cytoplasm, prematurely activated/folded ScpA forms a stable non-covalent complex with ScpB. Cleavage leads to the activation of ScpA probably by an auto-catalytic manner.

The protein localises to the secreted. It carries out the reaction Broad endopeptidase action on proteins including elastin, but rather limited hydrolysis of small-molecule substrates. Assays are conveniently made with hemoglobin, casein or Z-Phe-Arg-NHMec as substrate.. With respect to regulation, prematurely activated/folded staphopain A is inhibited by staphostatin A (ScpB), which is probably required to protect staphylococcal cytoplasmic proteins from degradation by ScpA. Its function is as follows. Cysteine protease that plays an important role in the inhibition of host innate immune response. Cleaves host elastins found in connective tissues, pulmonary surfactant protein A in the lungs, and the chemokine receptor CXCR2 on leukocytes. Proteolytic cleavage of surfactant protein A impairs bacterial phagocytosis by neutrophils while CXCR2 degradation blocks neutrophil activation and chemotaxis. Additionally, promotes vascular leakage by activating the plasma kallikerin/kinin system, resulting in hypotension. The protein is Staphopain A (sspP) of Staphylococcus aureus (strain COL).